The chain runs to 346 residues: GTPase Obg (346 aa).

An Obg domain is found at 1–159 (MQFVDEANIR…RNLGLELSVL (159 aa)). The segment at 127-149 (NVHFKSSTNRTPRQCTPGEPGDE) is disordered. Residues 130-140 (FKSSTNRTPRQ) are compositionally biased toward polar residues. The 174-residue stretch at 160 to 333 (ADVGLLGMPN…LVKEVAYGLE (174 aa)) folds into the OBG-type G domain. GTP contacts are provided by residues 166–173 (GMPNAGKS), 191–195 (FTTLY), 213–216 (DIPG), 283–286 (NKTD), and 314–316 (SAV). Mg(2+) is bound by residues Ser-173 and Thr-193.

The protein belongs to the TRAFAC class OBG-HflX-like GTPase superfamily. OBG GTPase family. Monomer. Mg(2+) is required as a cofactor.

Its subcellular location is the cytoplasm. An essential GTPase which binds GTP, GDP and possibly (p)ppGpp with moderate affinity, with high nucleotide exchange rates and a fairly low GTP hydrolysis rate. Plays a role in control of the cell cycle, stress response, ribosome biogenesis and in those bacteria that undergo differentiation, in morphogenesis control. This Hydrogenovibrio crunogenus (strain DSM 25203 / XCL-2) (Thiomicrospira crunogena) protein is GTPase Obg.